We begin with the raw amino-acid sequence, 107 residues long: Iron-binding protein IscA (107 aa).

Fe cation contacts are provided by C35, C99, and C101.

It belongs to the HesB/IscA family. Homodimer; may form tetramers and higher multimers. The cofactor is Fe cation.

Its function is as follows. Is able to transfer iron-sulfur clusters to apo-ferredoxin. Multiple cycles of [2Fe2S] cluster formation and transfer are observed, suggesting that IscA acts catalytically. Recruits intracellular free iron so as to provide iron for the assembly of transient iron-sulfur cluster in IscU in the presence of IscS, L-cysteine and the thioredoxin reductase system TrxA/TrxB. In Enterobacter sp. (strain 638), this protein is Iron-binding protein IscA.